The following is a 635-amino-acid chain: Probable extracellular metalloproteinase 1 (635 aa).

The first 19 residues, 1–19 (MHGLLLAAGLLSLPLHVLA), serve as a signal peptide directing secretion. Positions 20 to 246 (HPQPSTSTSL…VHNVVDYVAH (227 aa)) are excised as a propeptide. The N-linked (GlcNAc...) asparagine glycan is linked to N287. Zn(2+) is bound at residue H430. E431 is an active-site residue. H434 is a Zn(2+) binding site. Residues N475, N594, and N623 are each glycosylated (N-linked (GlcNAc...) asparagine).

Belongs to the peptidase M36 family. It depends on Zn(2+) as a cofactor.

It is found in the secreted. Secreted metalloproteinase probably acting as a virulence factor. The chain is Probable extracellular metalloproteinase 1 (MEP1) from Trichophyton verrucosum (strain HKI 0517).